A 272-amino-acid polypeptide reads, in one-letter code: 3-methyl-2-oxobutanoate hydroxymethyltransferase (272 aa).

D51 and D90 together coordinate Mg(2+). 3-methyl-2-oxobutanoate-binding positions include 51–52, D90, and K118; that span reads DS. E120 serves as a coordination point for Mg(2+). The active-site Proton acceptor is the E187.

It belongs to the PanB family. As to quaternary structure, homodecamer; pentamer of dimers. The cofactor is Mg(2+).

Its subcellular location is the cytoplasm. It carries out the reaction 3-methyl-2-oxobutanoate + (6R)-5,10-methylene-5,6,7,8-tetrahydrofolate + H2O = 2-dehydropantoate + (6S)-5,6,7,8-tetrahydrofolate. The protein operates within cofactor biosynthesis; (R)-pantothenate biosynthesis; (R)-pantoate from 3-methyl-2-oxobutanoate: step 1/2. Functionally, catalyzes the reversible reaction in which hydroxymethyl group from 5,10-methylenetetrahydrofolate is transferred onto alpha-ketoisovalerate to form ketopantoate. This is 3-methyl-2-oxobutanoate hydroxymethyltransferase from Xylella fastidiosa (strain M12).